The following is a 63-amino-acid chain: Conotoxin Cl14.11 (63 aa).

The N-terminal stretch at 1 to 21 is a signal peptide; that stretch reads MRFLLLLTVALLLTCIMETDA. Residues 22-34 constitute a propeptide that is removed on maturation; it reads EAKPEDLAERFRE.

In terms of processing, contains 2 disulfide bond. As to expression, expressed by the venom duct.

The protein localises to the secreted. This chain is Conotoxin Cl14.11, found in Californiconus californicus (California cone).